Here is a 493-residue protein sequence, read N- to C-terminus: Glycerol kinase (493 aa).

Threonine 12 serves as a coordination point for ADP. Residues threonine 12, threonine 13, and serine 14 each contribute to the ATP site. Threonine 12 provides a ligand contact to sn-glycerol 3-phosphate. Arginine 16 serves as a coordination point for ADP. Sn-glycerol 3-phosphate-binding residues include arginine 82, glutamate 83, tyrosine 132, and aspartate 239. The glycerol site is built by arginine 82, glutamate 83, tyrosine 132, aspartate 239, and glutamine 240. ADP contacts are provided by threonine 261 and glycine 303. Residues threonine 261, glycine 303, glutamine 307, and glycine 402 each coordinate ATP. The ADP site is built by glycine 402 and asparagine 406.

This sequence belongs to the FGGY kinase family.

It catalyses the reaction glycerol + ATP = sn-glycerol 3-phosphate + ADP + H(+). It functions in the pathway polyol metabolism; glycerol degradation via glycerol kinase pathway; sn-glycerol 3-phosphate from glycerol: step 1/1. Its function is as follows. Key enzyme in the regulation of glycerol uptake and metabolism. Catalyzes the phosphorylation of glycerol to yield sn-glycerol 3-phosphate. This chain is Glycerol kinase, found in Thermococcus gammatolerans (strain DSM 15229 / JCM 11827 / EJ3).